The following is a 660-amino-acid chain: Anoctamin-10 (660 aa).

The Cytoplasmic portion of the chain corresponds to 1–207; it reads MKVTLSALDT…DSIRGYFGET (207 aa). The chain crosses the membrane as a helical span at residues 208-228; it reads IALYFGFLEYFTFALIPMAVI. Residues 229-240 lie on the Extracellular side of the membrane; it reads GLPYYLFVWEDY. Residues 241-261 form a helical membrane-spanning segment; the sequence is DKYVIFASFNLIWSTVILELW. Over 262–316 the chain is Cytoplasmic; the sequence is KRGCANMTYRWGTLLMKRKFEEPRPGFHGVLGINSITGKEEPLYPSYKRQLRIYL. Residues 317-337 form a helical membrane-spanning segment; the sequence is VSLPFVCLCLYFSLYVMMIYF. Residues 338–352 lie on the Extracellular side of the membrane; that stretch reads DMEVWALGLHENSGS. The helical transmembrane segment at 353–373 threads the bilayer; that stretch reads EWTSVLLYVPSIIYAIVIEIM. Topologically, residues 374-400 are cytoplasmic; sequence NRLYRYAAEFLTSWENHRLESAYQNHL. A helical transmembrane segment spans residues 401-421; sequence ILKVLVFNFLNCFASLFYIAF. Topologically, residues 422 to 500 are extracellular; it reads VLKDMKLLRQ…YLGTFDDYLE (79 aa). The chain crosses the membrane as a helical span at residues 501–521; that stretch reads LFLQFGYVSLFSCVYPLAAAF. At 522–553 the chain is on the cytoplasmic side; the sequence is AVLNNFTEVNSDALKMCRVFKRPFSEPSANIG. The chain crosses the membrane as a helical span at residues 554 to 574; the sequence is VWQLAFETMSVISVVTNCALI. The Extracellular portion of the chain corresponds to 575–590; that stretch reads GMSPQVNAVFPESKAD. Residues 591–611 form a helical membrane-spanning segment; that stretch reads LILIVVAVEHALLALKFILAF. At 612-660 the chain is on the cytoplasmic side; that stretch reads AIPDKPRHIQMKLARLEFESLEALKQQQMKLVTENLKEEPMESGKEKAT.

Belongs to the anoctamin family. Highly expressed in the brain. Intermediate levels in the retina and heart and low levels in the placenta, liver, lung, duodenum, kidney, testis and spleen. In brain areas, highest expression in the frontal and occipital cortices and in the cerebellum. Lower expression in the fetal brain than in the adult brain.

It localises to the cell membrane. Its function is as follows. Does not exhibit calcium-activated chloride channel (CaCC) activity. Can inhibit the activity of ANO1. The polypeptide is Anoctamin-10 (ANO10) (Homo sapiens (Human)).